The sequence spans 950 residues: Coatomer subunit beta-2 (950 aa).

HEAT repeat units follow at residues 92-126 (PEMI…LSEP), 127-164 (EVLE…LPHG), 275-312 (TAVR…TSHR), 313-350 (DVMV…ARNV), and 392-429 (EVAG…TNPK).

Oligomeric complex that consists of at least the alpha, beta, beta', gamma, delta, epsilon and zeta subunits.

The protein localises to the cytoplasm. It is found in the golgi apparatus membrane. The protein resides in the cytoplasmic vesicle. It localises to the COPI-coated vesicle membrane. The coatomer is a cytosolic protein complex that binds to dilysine motifs and reversibly associates with Golgi non-clathrin-coated vesicles, which further mediate biosynthetic protein transport from the ER, via the Golgi up to the trans Golgi network. Coatomer complex is required for budding from Golgi membranes, and is essential for the retrograde Golgi-to-ER transport of dilysine-tagged proteins. This is Coatomer subunit beta-2 from Oryza sativa subsp. japonica (Rice).